A 148-amino-acid chain; its full sequence is Protein Turandot Z (148 aa).

A signal peptide spans 1–23; the sequence is MYFAIRLSFVLAVLFCLTGNGSA.

Belongs to the Turandot family.

It is found in the secreted. In terms of biological role, a humoral factor that may play a role in stress tolerance. The chain is Protein Turandot Z from Drosophila simulans (Fruit fly).